The primary structure comprises 154 residues: Ribonuclease H (154 aa).

In terms of domain architecture, RNase H type-1 spans 1–142 (MTKQVEIFTD…CDELAREGAN (142 aa)). Mg(2+) contacts are provided by aspartate 10, glutamate 48, aspartate 70, and aspartate 134.

This sequence belongs to the RNase H family. As to quaternary structure, monomer. The cofactor is Mg(2+).

The protein localises to the cytoplasm. The enzyme catalyses Endonucleolytic cleavage to 5'-phosphomonoester.. In terms of biological role, endonuclease that specifically degrades the RNA of RNA-DNA hybrids. The chain is Ribonuclease H from Yersinia enterocolitica serotype O:8 / biotype 1B (strain NCTC 13174 / 8081).